A 239-amino-acid polypeptide reads, in one-letter code: Ribonuclease PH (239 aa).

Residues Arg87 and 125–127 (GTR) each bind phosphate.

It belongs to the RNase PH family. Homohexameric ring arranged as a trimer of dimers.

The catalysed reaction is tRNA(n+1) + phosphate = tRNA(n) + a ribonucleoside 5'-diphosphate. In terms of biological role, phosphorolytic 3'-5' exoribonuclease that plays an important role in tRNA 3'-end maturation. Removes nucleotide residues following the 3'-CCA terminus of tRNAs; can also add nucleotides to the ends of RNA molecules by using nucleoside diphosphates as substrates, but this may not be physiologically important. Probably plays a role in initiation of 16S rRNA degradation (leading to ribosome degradation) during starvation. In Dehalococcoides mccartyi (strain ATCC BAA-2266 / KCTC 15142 / 195) (Dehalococcoides ethenogenes (strain 195)), this protein is Ribonuclease PH.